A 645-amino-acid chain; its full sequence is 1-deoxy-D-xylulose-5-phosphate synthase (645 aa).

Residues H79 and 120–122 contribute to the thiamine diphosphate site; that span reads AHS. D155 lines the Mg(2+) pocket. Thiamine diphosphate contacts are provided by residues 156–157, N184, Y293, and E375; that span reads GA. A Mg(2+)-binding site is contributed by N184.

Belongs to the transketolase family. DXPS subfamily. As to quaternary structure, homodimer. It depends on Mg(2+) as a cofactor. Requires thiamine diphosphate as cofactor.

The catalysed reaction is D-glyceraldehyde 3-phosphate + pyruvate + H(+) = 1-deoxy-D-xylulose 5-phosphate + CO2. Its pathway is metabolic intermediate biosynthesis; 1-deoxy-D-xylulose 5-phosphate biosynthesis; 1-deoxy-D-xylulose 5-phosphate from D-glyceraldehyde 3-phosphate and pyruvate: step 1/1. Catalyzes the acyloin condensation reaction between C atoms 2 and 3 of pyruvate and glyceraldehyde 3-phosphate to yield 1-deoxy-D-xylulose-5-phosphate (DXP). In Ruegeria sp. (strain TM1040) (Silicibacter sp.), this protein is 1-deoxy-D-xylulose-5-phosphate synthase.